The following is a 61-amino-acid chain: UPF0391 membrane protein Aave_0978 (61 aa).

2 helical membrane passes run 5-25 and 33-53; these read AIIF…GVAA and ILFF…VLGV.

It belongs to the UPF0391 family.

Its subcellular location is the cell membrane. In Paracidovorax citrulli (strain AAC00-1) (Acidovorax citrulli), this protein is UPF0391 membrane protein Aave_0978.